A 78-amino-acid polypeptide reads, in one-letter code: Small ribosomal subunit protein uS15c (78 aa).

This sequence belongs to the universal ribosomal protein uS15 family. As to quaternary structure, part of the 30S ribosomal subunit.

The protein localises to the plastid. The protein resides in the chloroplast. This chain is Small ribosomal subunit protein uS15c (rps15-A), found in Saccharum officinarum (Sugarcane).